A 165-amino-acid chain; its full sequence is Type VI lipase immunity protein Tli3 (165 aa).

The first 21 residues, 1 to 21 (MKCKTLLIACLFGLGSAQALA), serve as a signal peptide directing secretion.

In terms of assembly, interacts with the Tle3 toxin.

The protein resides in the periplasm. Functionally, immunity protein that neutralizes the toxicity of the P.aeruginosa antibacterial toxin Tle3 in the periplasm to protect the cell from fratricide intoxication. In Pseudomonas aeruginosa (strain ATCC 15692 / DSM 22644 / CIP 104116 / JCM 14847 / LMG 12228 / 1C / PRS 101 / PAO1), this protein is Type VI lipase immunity protein Tli3.